Consider the following 317-residue polypeptide: 4-diphosphocytidyl-2-C-methyl-D-erythritol kinase (317 aa).

The active site involves Lys-11. 99 to 109 is a binding site for ATP; the sequence is PVAAGLAGGST. Asp-141 is an active-site residue.

The protein belongs to the GHMP kinase family. IspE subfamily.

It catalyses the reaction 4-CDP-2-C-methyl-D-erythritol + ATP = 4-CDP-2-C-methyl-D-erythritol 2-phosphate + ADP + H(+). Its pathway is isoprenoid biosynthesis; isopentenyl diphosphate biosynthesis via DXP pathway; isopentenyl diphosphate from 1-deoxy-D-xylulose 5-phosphate: step 3/6. Catalyzes the phosphorylation of the position 2 hydroxy group of 4-diphosphocytidyl-2C-methyl-D-erythritol. This Nostoc sp. (strain PCC 7120 / SAG 25.82 / UTEX 2576) protein is 4-diphosphocytidyl-2-C-methyl-D-erythritol kinase.